The chain runs to 403 residues: Phosphopentomutase (403 aa).

Residues Asp-13, Asp-298, His-303, Asp-339, His-340, and His-351 each contribute to the Mn(2+) site.

Belongs to the phosphopentomutase family. The cofactor is Mn(2+).

It localises to the cytoplasm. It carries out the reaction 2-deoxy-alpha-D-ribose 1-phosphate = 2-deoxy-D-ribose 5-phosphate. The catalysed reaction is alpha-D-ribose 1-phosphate = D-ribose 5-phosphate. It participates in carbohydrate degradation; 2-deoxy-D-ribose 1-phosphate degradation; D-glyceraldehyde 3-phosphate and acetaldehyde from 2-deoxy-alpha-D-ribose 1-phosphate: step 1/2. Functionally, isomerase that catalyzes the conversion of deoxy-ribose 1-phosphate (dRib-1-P) and ribose 1-phosphate (Rib-1-P) to deoxy-ribose 5-phosphate (dRib-5-P) and ribose 5-phosphate (Rib-5-P), respectively. This Streptococcus uberis (strain ATCC BAA-854 / 0140J) protein is Phosphopentomutase.